The chain runs to 334 residues: DCN1-like protein 3 (334 aa).

Residues Val-112–Lys-301 form the DCUN1 domain. The tract at residues Ser-308 to Ser-334 is disordered. The segment covering Val-325–Ser-334 has biased composition (basic and acidic residues).

It is found in the cell membrane. Functionally, promotes neddylation of cullin components of SCF-type E3 ubiquitin ligase complexes and thus regulates SCF-type complex activity. Function promotes cell proliferation. This is DCN1-like protein 3 from Drosophila melanogaster (Fruit fly).